The sequence spans 452 residues: tRNA modification GTPase MnmE (452 aa).

The (6S)-5-formyl-5,6,7,8-tetrahydrofolate site is built by Arg-24, Glu-81, and Lys-120. The TrmE-type G domain maps to 217-373 (GIKTAIVGKT…LIMKIEQMHI (157 aa)). Asn-227 provides a ligand contact to K(+). GTP-binding positions include 227–232 (NVGKSS), 246–252 (TDIHGTT), and 271–274 (DTAG). Ser-231 provides a ligand contact to Mg(2+). Residues Thr-246, Ile-248, and Thr-251 each contribute to the K(+) site. Thr-252 serves as a coordination point for Mg(2+). Lys-452 contributes to the (6S)-5-formyl-5,6,7,8-tetrahydrofolate binding site.

The protein belongs to the TRAFAC class TrmE-Era-EngA-EngB-Septin-like GTPase superfamily. TrmE GTPase family. In terms of assembly, homodimer. Heterotetramer of two MnmE and two MnmG subunits. It depends on K(+) as a cofactor.

The protein resides in the cytoplasm. Its function is as follows. Exhibits a very high intrinsic GTPase hydrolysis rate. Involved in the addition of a carboxymethylaminomethyl (cmnm) group at the wobble position (U34) of certain tRNAs, forming tRNA-cmnm(5)s(2)U34. This is tRNA modification GTPase MnmE from Mesoplasma florum (strain ATCC 33453 / NBRC 100688 / NCTC 11704 / L1) (Acholeplasma florum).